We begin with the raw amino-acid sequence, 320 residues long: N-acetylneuraminate lyase (320 aa).

Residues threonine 51 and threonine 52 each coordinate aceneuramate. Tyrosine 143 (proton donor) is an active-site residue. The Schiff-base intermediate with substrate role is filled by lysine 173. 5 residues coordinate aceneuramate: serine 175, glycine 199, aspartate 201, glutamate 202, and serine 218.

The protein belongs to the DapA family. NanA subfamily. Homotetramer.

Its subcellular location is the cytoplasm. The enzyme catalyses aceneuramate = aldehydo-N-acetyl-D-mannosamine + pyruvate. Its pathway is amino-sugar metabolism; N-acetylneuraminate degradation. Catalyzes the cleavage of N-acetylneuraminic acid (sialic acid) to form pyruvate and N-acetylmannosamine via a Schiff base intermediate. It prevents sialic acids from being recycled and returning to the cell surface. Involved in the N-glycolylneuraminic acid (Neu5Gc) degradation pathway. This Rattus norvegicus (Rat) protein is N-acetylneuraminate lyase.